The chain runs to 253 residues: 5'/3'-nucleotidase SurE (253 aa).

Asp-8, Asp-9, Ser-39, and Asn-92 together coordinate a divalent metal cation.

This sequence belongs to the SurE nucleotidase family. Requires a divalent metal cation as cofactor.

The protein resides in the cytoplasm. The enzyme catalyses a ribonucleoside 5'-phosphate + H2O = a ribonucleoside + phosphate. The catalysed reaction is a ribonucleoside 3'-phosphate + H2O = a ribonucleoside + phosphate. It catalyses the reaction [phosphate](n) + H2O = [phosphate](n-1) + phosphate + H(+). Its function is as follows. Nucleotidase with a broad substrate specificity as it can dephosphorylate various ribo- and deoxyribonucleoside 5'-monophosphates and ribonucleoside 3'-monophosphates with highest affinity to 3'-AMP. Also hydrolyzes polyphosphate (exopolyphosphatase activity) with the preference for short-chain-length substrates (P20-25). Might be involved in the regulation of dNTP and NTP pools, and in the turnover of 3'-mononucleotides produced by numerous intracellular RNases (T1, T2, and F) during the degradation of various RNAs. In Salmonella paratyphi A (strain AKU_12601), this protein is 5'/3'-nucleotidase SurE.